The primary structure comprises 403 residues: Peroxisomal membrane protein PEX13 (403 aa).

Positions 1–11 are enriched in pro residues; it reads MASQPPPPPKP. Positions 1-68 are disordered; that stretch reads MASQPPPPPK…PSQQTGSSSV (68 aa). Residues 1–134 are Peroxisomal matrix-facing; the sequence is MASQPPPPPK…SSRGAFQSIE (134 aa). The span at 59 to 68 shows a compositional bias: polar residues; the sequence is PSQQTGSSSV. A helical membrane pass occupies residues 135 to 155; the sequence is SIVHAFASVSMMMDATFSAVY. A targeting to peroxisomes region spans residues 145 to 233; it reads MMMDATFSAV…EDRAATSAKS (89 aa). Residues 156-174 lie on the Cytoplasmic side of the membrane; sequence NSFRAVLDVANHFSRLKIH. Residues 175-192 traverse the membrane as a helical segment; sequence FTKVFSAFALVRTIRYLY. Positions 175–196 are interaction with PEX19; it reads FTKVFSAFALVRTIRYLYRRLQ. Over 193–233 the chain is Peroxisomal matrix; the sequence is RRLQRMLGLRRGSENEDLWAESEGTVACLGAEDRAATSAKS. The chain crosses the membrane as a helical span at residues 234–254; that stretch reads WPIFLFFAVILGGPYLIWKLL. Residues 255–403 lie on the Cytoplasmic side of the membrane; sequence STHSDEVTDS…IGKDGEKQDL (149 aa). Positions 272–336 constitute an SH3 domain; that stretch reads DDHVVARAEY…PANYVKILGK (65 aa). Position 354 is a phosphoserine (Ser354).

Belongs to the peroxin-13 family. Interacts (via SH3 domain) with PEX14 (via SH3-binding motif); forming the PEX13-PEX14 docking complex. Interacts with PEX19.

Its subcellular location is the peroxisome membrane. Functionally, component of the PEX13-PEX14 docking complex, a translocon channel that specifically mediates the import of peroxisomal cargo proteins bound to PEX5 receptor. The PEX13-PEX14 docking complex forms a large import pore which can be opened to a diameter of about 9 nm. Mechanistically, PEX5 receptor along with cargo proteins associates with the PEX14 subunit of the PEX13-PEX14 docking complex in the cytosol, leading to the insertion of the receptor into the organelle membrane with the concomitant translocation of the cargo into the peroxisome matrix. Involved in the import of PTS1- and PTS2-type containing proteins. The sequence is that of Peroxisomal membrane protein PEX13 from Homo sapiens (Human).